We begin with the raw amino-acid sequence, 332 residues long: Holliday junction branch migration complex subunit RuvB (332 aa).

The tract at residues 1–181 is large ATPase domain (RuvB-L); it reads MERIISELEM…FGVSHKMEYY (181 aa). The ATP site is built by L20, R21, G62, K65, T66, T67, R171, Y181, and R218. Mg(2+) is bound at residue T66. The tract at residues 182-252 is small ATPAse domain (RuvB-S); that stretch reads NENEIKSIII…SAKNALDMLG (71 aa). The head domain (RuvB-H) stretch occupies residues 255–332; the sequence is SNGLDDLDRN…QHFKKVEVKI (78 aa). The DNA site is built by R291, R310, and R315.

The protein belongs to the RuvB family. As to quaternary structure, homohexamer. Forms an RuvA(8)-RuvB(12)-Holliday junction (HJ) complex. HJ DNA is sandwiched between 2 RuvA tetramers; dsDNA enters through RuvA and exits via RuvB. An RuvB hexamer assembles on each DNA strand where it exits the tetramer. Each RuvB hexamer is contacted by two RuvA subunits (via domain III) on 2 adjacent RuvB subunits; this complex drives branch migration. In the full resolvosome a probable DNA-RuvA(4)-RuvB(12)-RuvC(2) complex forms which resolves the HJ.

It is found in the cytoplasm. The catalysed reaction is ATP + H2O = ADP + phosphate + H(+). Functionally, the RuvA-RuvB-RuvC complex processes Holliday junction (HJ) DNA during genetic recombination and DNA repair, while the RuvA-RuvB complex plays an important role in the rescue of blocked DNA replication forks via replication fork reversal (RFR). RuvA specifically binds to HJ cruciform DNA, conferring on it an open structure. The RuvB hexamer acts as an ATP-dependent pump, pulling dsDNA into and through the RuvAB complex. RuvB forms 2 homohexamers on either side of HJ DNA bound by 1 or 2 RuvA tetramers; 4 subunits per hexamer contact DNA at a time. Coordinated motions by a converter formed by DNA-disengaged RuvB subunits stimulates ATP hydrolysis and nucleotide exchange. Immobilization of the converter enables RuvB to convert the ATP-contained energy into a lever motion, pulling 2 nucleotides of DNA out of the RuvA tetramer per ATP hydrolyzed, thus driving DNA branch migration. The RuvB motors rotate together with the DNA substrate, which together with the progressing nucleotide cycle form the mechanistic basis for DNA recombination by continuous HJ branch migration. Branch migration allows RuvC to scan DNA until it finds its consensus sequence, where it cleaves and resolves cruciform DNA. The protein is Holliday junction branch migration complex subunit RuvB of Fusobacterium nucleatum subsp. nucleatum (strain ATCC 25586 / DSM 15643 / BCRC 10681 / CIP 101130 / JCM 8532 / KCTC 2640 / LMG 13131 / VPI 4355).